We begin with the raw amino-acid sequence, 299 residues long: Acetylglutamate kinase (299 aa).

Residues 70–71 (GG), R92, and N186 contribute to the substrate site.

It belongs to the acetylglutamate kinase family. ArgB subfamily.

Its subcellular location is the cytoplasm. It carries out the reaction N-acetyl-L-glutamate + ATP = N-acetyl-L-glutamyl 5-phosphate + ADP. The protein operates within amino-acid biosynthesis; L-arginine biosynthesis; N(2)-acetyl-L-ornithine from L-glutamate: step 2/4. Catalyzes the ATP-dependent phosphorylation of N-acetyl-L-glutamate. This is Acetylglutamate kinase from Caldanaerobacter subterraneus subsp. tengcongensis (strain DSM 15242 / JCM 11007 / NBRC 100824 / MB4) (Thermoanaerobacter tengcongensis).